Reading from the N-terminus, the 159-residue chain is 2-C-methyl-D-erythritol 2,4-cyclodiphosphate synthase (159 aa).

2 residues coordinate a divalent metal cation: aspartate 8 and histidine 10. 4-CDP-2-C-methyl-D-erythritol 2-phosphate contacts are provided by residues 8-10 and 34-35; these read DSH and HS. An a divalent metal cation-binding site is contributed by histidine 42. Residues 56 to 58, 61 to 65, phenylalanine 139, and arginine 142 contribute to the 4-CDP-2-C-methyl-D-erythritol 2-phosphate site; these read DIG and FPDSD.

It belongs to the IspF family. In terms of assembly, homotrimer. The cofactor is a divalent metal cation.

It catalyses the reaction 4-CDP-2-C-methyl-D-erythritol 2-phosphate = 2-C-methyl-D-erythritol 2,4-cyclic diphosphate + CMP. Its pathway is isoprenoid biosynthesis; isopentenyl diphosphate biosynthesis via DXP pathway; isopentenyl diphosphate from 1-deoxy-D-xylulose 5-phosphate: step 4/6. Involved in the biosynthesis of isopentenyl diphosphate (IPP) and dimethylallyl diphosphate (DMAPP), two major building blocks of isoprenoid compounds. Catalyzes the conversion of 4-diphosphocytidyl-2-C-methyl-D-erythritol 2-phosphate (CDP-ME2P) to 2-C-methyl-D-erythritol 2,4-cyclodiphosphate (ME-CPP) with a corresponding release of cytidine 5-monophosphate (CMP). The protein is 2-C-methyl-D-erythritol 2,4-cyclodiphosphate synthase of Syntrophus aciditrophicus (strain SB).